A 122-amino-acid chain; its full sequence is Large ribosomal subunit protein uL14c (122 aa).

It belongs to the universal ribosomal protein uL14 family. As to quaternary structure, part of the 50S ribosomal subunit.

It is found in the plastid. It localises to the chloroplast. Functionally, binds to 23S rRNA. This Citrus sinensis (Sweet orange) protein is Large ribosomal subunit protein uL14c.